A 228-amino-acid polypeptide reads, in one-letter code: Probable methylthioribulose-1-phosphate dehydratase (228 aa).

Residue cysteine 87 participates in substrate binding. 2 residues coordinate Zn(2+): histidine 105 and histidine 107. The active-site Proton donor/acceptor is the glutamate 129. Residue histidine 185 participates in Zn(2+) binding.

This sequence belongs to the aldolase class II family. MtnB subfamily. It depends on Zn(2+) as a cofactor.

It localises to the cytoplasm. The enzyme catalyses 5-(methylsulfanyl)-D-ribulose 1-phosphate = 5-methylsulfanyl-2,3-dioxopentyl phosphate + H2O. It functions in the pathway amino-acid biosynthesis; L-methionine biosynthesis via salvage pathway; L-methionine from S-methyl-5-thio-alpha-D-ribose 1-phosphate: step 2/6. In terms of biological role, catalyzes the dehydration of methylthioribulose-1-phosphate (MTRu-1-P) into 2,3-diketo-5-methylthiopentyl-1-phosphate (DK-MTP-1-P). The polypeptide is Probable methylthioribulose-1-phosphate dehydratase (Drosophila willistoni (Fruit fly)).